An 873-amino-acid polypeptide reads, in one-letter code: Coatomer subunit gamma-2 (873 aa).

The span at 1-11 (MIKKFDKKDEE) shows a compositional bias: basic and acidic residues. Residues 1-21 (MIKKFDKKDEESGSGSNPFQN) are disordered. HEAT repeat units lie at residues 64–101 (TEAT…ISED), 283–320 (RELA…KHPS), 321–355 (AVTA…GSES), 356–392 (SVDR…KYPR), 394–430 (HSAM…ENPE), and 467–504 (PQPS…QNDD).

The protein belongs to the COPG family. Oligomeric complex.

It localises to the cytoplasm. Its subcellular location is the golgi apparatus membrane. It is found in the cytoplasmic vesicle. The protein localises to the COPI-coated vesicle membrane. The coatomer is a cytosolic protein complex that binds to dilysine motifs and reversibly associates with Golgi non-clathrin-coated vesicles, which further mediate biosynthetic protein transport from the ER, via the Golgi up to the trans Golgi network. Coatomer complex is required for budding from Golgi membranes, and is essential for the retrograde Golgi-to-ER transport of dilysine-tagged proteins. This chain is Coatomer subunit gamma-2 (copg2), found in Takifugu rubripes (Japanese pufferfish).